The following is a 674-amino-acid chain: Sterile alpha motif domain-containing protein 15 (674 aa).

The segment covering 1-18 has biased composition (acidic residues); that stretch reads MAEVPEDYDSGPDEDGEL. A disordered region spans residues 1 to 448; sequence MAEVPEDYDS…LEHREPKRGK (448 aa). Basic and acidic residues-rich tracts occupy residues 87 to 142, 195 to 223, and 236 to 274; these read IAKE…EEAK, ESLR…KLGE, and TKPE…KSSE. A compositionally biased stretch (acidic residues) spans 276–290; that stretch reads AGLEPPEETQPEVPE. Composition is skewed to basic and acidic residues over residues 291–322, 330–346, 354–372, and 391–429; these read EMQR…KSTD, EEIK…KTNE, EMMK…EKKN, and VEEK…EPIK. Residues 545–608 enclose the SAM domain; that stretch reads WDPEEVAEWI…SRHTQELLEI (64 aa).

The chain is Sterile alpha motif domain-containing protein 15 (SAMD15) from Homo sapiens (Human).